Here is a 420-residue protein sequence, read N- to C-terminus: Gamma-glutamyl phosphate reductase (420 aa).

It belongs to the gamma-glutamyl phosphate reductase family.

It localises to the cytoplasm. It catalyses the reaction L-glutamate 5-semialdehyde + phosphate + NADP(+) = L-glutamyl 5-phosphate + NADPH + H(+). The protein operates within amino-acid biosynthesis; L-proline biosynthesis; L-glutamate 5-semialdehyde from L-glutamate: step 2/2. Its function is as follows. Catalyzes the NADPH-dependent reduction of L-glutamate 5-phosphate into L-glutamate 5-semialdehyde and phosphate. The product spontaneously undergoes cyclization to form 1-pyrroline-5-carboxylate. In Neisseria meningitidis serogroup A / serotype 4A (strain DSM 15465 / Z2491), this protein is Gamma-glutamyl phosphate reductase.